The primary structure comprises 433 residues: GTPase Obg (433 aa).

The Obg domain maps to 1 to 159 (MGLTDYCECR…LHVSLEIKYL (159 aa)). Residues 160–329 (ANVGIVGFPN…LVAQVFALHQ (170 aa)) enclose the OBG-type G domain. Residues 166–173 (GFPNTGKS), 191–195 (FTTLV), 212–215 (DIPG), 282–285 (NKTD), and 310–312 (ISA) contribute to the GTP site. The Mg(2+) site is built by serine 173 and threonine 193. The region spanning 355-433 (ASETDHDPLN…FAGQEFVIND (79 aa)) is the OCT domain.

It belongs to the TRAFAC class OBG-HflX-like GTPase superfamily. OBG GTPase family. As to quaternary structure, monomer. The cofactor is Mg(2+).

The protein resides in the cytoplasm. Its function is as follows. An essential GTPase which binds GTP, GDP and possibly (p)ppGpp with moderate affinity, with high nucleotide exchange rates and a fairly low GTP hydrolysis rate. Plays a role in control of the cell cycle, stress response, ribosome biogenesis and in those bacteria that undergo differentiation, in morphogenesis control. This is GTPase Obg from Mycoplasma pneumoniae (strain ATCC 29342 / M129 / Subtype 1) (Mycoplasmoides pneumoniae).